The sequence spans 416 residues: Histidine--tRNA ligase (416 aa).

Belongs to the class-II aminoacyl-tRNA synthetase family. As to quaternary structure, homodimer.

Its subcellular location is the cytoplasm. The enzyme catalyses tRNA(His) + L-histidine + ATP = L-histidyl-tRNA(His) + AMP + diphosphate + H(+). This chain is Histidine--tRNA ligase, found in Clostridium kluyveri (strain NBRC 12016).